A 451-amino-acid chain; its full sequence is Bacteriochlorophyllide d C-8(2)-methyltransferase (451 aa).

In terms of domain architecture, B12-binding spans 1–118; the sequence is MDDDSNQKPL…DDVANNRLKE (118 aa). The region spanning 148 to 377 is the Radical SAM core domain; sequence VDGTKSIPIY…ALHLVIKSDR (230 aa). [4Fe-4S] cluster contacts are provided by cysteine 162, cysteine 166, and cysteine 169.

It belongs to the radical SAM superfamily. [4Fe-4S] cluster serves as cofactor.

The protein resides in the cytoplasm. The catalysed reaction is 8,12-diethyl-3-vinylbacteriochlorophyllide d + S-adenosyl-L-methionine = 12-ethyl-8-propyl-3-vinylbacteriochlorophyllide d + S-adenosyl-L-homocysteine + H(+). The enzyme catalyses 12-ethyl-8-propyl-3-vinylbacteriochlorophyllide d + S-adenosyl-L-methionine = 12-ethyl-8-isobutyl-3-vinylbacteriochlorophyllide d + S-adenosyl-L-homocysteine + H(+). The protein operates within porphyrin-containing compound metabolism; bacteriochlorophyll biosynthesis (light-independent). Functionally, involved in the biosynthesis of the major light-harvesting pigment bacteriochlorophyll c (BChlc), which confers a significant competitive advantage to green sulfur bacteria living at limiting red and near-infrared light intensities. BchQ is a methyltransferase that adds two consecutive methyl groups to the ethyl carbon at the C-8(2) position of 8,12-diethyl-3-vinylbacteriochlorophyllide d to yield 12-ethyl-8-isobutyl-3-vinylbacteriochlorophyllide d. The chain is Bacteriochlorophyllide d C-8(2)-methyltransferase from Chlorobaculum tepidum (strain ATCC 49652 / DSM 12025 / NBRC 103806 / TLS) (Chlorobium tepidum).